A 245-amino-acid polypeptide reads, in one-letter code: 5-oxoprolinase subunit A (245 aa).

It belongs to the LamB/PxpA family. Forms a complex composed of PxpA, PxpB and PxpC.

It catalyses the reaction 5-oxo-L-proline + ATP + 2 H2O = L-glutamate + ADP + phosphate + H(+). Its function is as follows. Catalyzes the cleavage of 5-oxoproline to form L-glutamate coupled to the hydrolysis of ATP to ADP and inorganic phosphate. In Neisseria meningitidis serogroup A / serotype 4A (strain DSM 15465 / Z2491), this protein is 5-oxoprolinase subunit A.